A 611-amino-acid chain; its full sequence is Threonine--tRNA ligase (611 aa).

Residues 211-509 (DHRKLGTELE…LTEHYAGEFP (299 aa)) are catalytic. Residues Cys310, His361, and His486 each coordinate Zn(2+).

The protein belongs to the class-II aminoacyl-tRNA synthetase family. In terms of assembly, homodimer. The cofactor is Zn(2+).

The protein localises to the cytoplasm. The catalysed reaction is tRNA(Thr) + L-threonine + ATP = L-threonyl-tRNA(Thr) + AMP + diphosphate + H(+). Catalyzes the attachment of threonine to tRNA(Thr) in a two-step reaction: L-threonine is first activated by ATP to form Thr-AMP and then transferred to the acceptor end of tRNA(Thr). Also edits incorrectly charged L-seryl-tRNA(Thr). The polypeptide is Threonine--tRNA ligase (Nautilia profundicola (strain ATCC BAA-1463 / DSM 18972 / AmH)).